The following is a 363-amino-acid chain: MTSKIENITIEQLPIIDIESYGNDKEEELKKKLISKEIENACKNFGFFYIKGHGIDQELIDRLERLSKKFFSLDQSIKMKYRMELAQKAWRGYFVVGGELTSGLKDWKEGLYLGTELNDDHPLVIAQTPLHGLNLFPTLEEEIEYDIVGFKDTILTYIDKVTKLGHSLMELIAISLNLSADYFSSRYTKDPLILYRIFNYPSIISSGDDNKTTGESSDDNDKVEWGVGEHTDYGVLTILYQDDVGGLQVHSKNGWISAPPIKGTFVCNIGDMLDRMTGGLYRSTPHRVELNRSGRDRISFPLFFDPNFNSYPTEIEGIEQIENKDDSSSRWDHFNIHSFKGSYGQYLLNKIGKVFPDLKNNVL.

In terms of domain architecture, Fe2OG dioxygenase spans 197–306 (IFNYPSIISS…RISFPLFFDP (110 aa)). Fe cation-binding residues include His230, Asp232, and His286. Arg297 contacts 2-oxoglutarate.

The protein belongs to the iron/ascorbate-dependent oxidoreductase family. Fe(2+) is required as a cofactor.

This Dictyostelium discoideum (Social amoeba) protein is Probable iron/ascorbate oxidoreductase DDB_G0283291.